A 325-amino-acid polypeptide reads, in one-letter code: 4-hydroxy-3-methylbut-2-enyl diphosphate reductase (325 aa).

Residue C13 participates in [4Fe-4S] cluster binding. Positions 42 and 76 each coordinate (2E)-4-hydroxy-3-methylbut-2-enyl diphosphate. Dimethylallyl diphosphate-binding residues include H42 and H76. Isopentenyl diphosphate is bound by residues H42 and H76. [4Fe-4S] cluster is bound at residue C98. Residue H126 participates in (2E)-4-hydroxy-3-methylbut-2-enyl diphosphate binding. A dimethylallyl diphosphate-binding site is contributed by H126. Position 126 (H126) interacts with isopentenyl diphosphate. E128 (proton donor) is an active-site residue. T169 contributes to the (2E)-4-hydroxy-3-methylbut-2-enyl diphosphate binding site. C230 provides a ligand contact to [4Fe-4S] cluster. Residues S258, S259, N260, and S306 each coordinate (2E)-4-hydroxy-3-methylbut-2-enyl diphosphate. Residues S258, S259, N260, and S306 each contribute to the dimethylallyl diphosphate site. S258, S259, N260, and S306 together coordinate isopentenyl diphosphate.

It belongs to the IspH family. The cofactor is [4Fe-4S] cluster.

It carries out the reaction isopentenyl diphosphate + 2 oxidized [2Fe-2S]-[ferredoxin] + H2O = (2E)-4-hydroxy-3-methylbut-2-enyl diphosphate + 2 reduced [2Fe-2S]-[ferredoxin] + 2 H(+). The catalysed reaction is dimethylallyl diphosphate + 2 oxidized [2Fe-2S]-[ferredoxin] + H2O = (2E)-4-hydroxy-3-methylbut-2-enyl diphosphate + 2 reduced [2Fe-2S]-[ferredoxin] + 2 H(+). Its pathway is isoprenoid biosynthesis; dimethylallyl diphosphate biosynthesis; dimethylallyl diphosphate from (2E)-4-hydroxy-3-methylbutenyl diphosphate: step 1/1. It participates in isoprenoid biosynthesis; isopentenyl diphosphate biosynthesis via DXP pathway; isopentenyl diphosphate from 1-deoxy-D-xylulose 5-phosphate: step 6/6. Catalyzes the conversion of 1-hydroxy-2-methyl-2-(E)-butenyl 4-diphosphate (HMBPP) into a mixture of isopentenyl diphosphate (IPP) and dimethylallyl diphosphate (DMAPP). Acts in the terminal step of the DOXP/MEP pathway for isoprenoid precursor biosynthesis. This is 4-hydroxy-3-methylbut-2-enyl diphosphate reductase from Prosthecochloris aestuarii (strain DSM 271 / SK 413).